The sequence spans 64 residues: Protein DsrB (64 aa).

This sequence belongs to the DsrB family.

The sequence is that of Protein DsrB from Salmonella enteritidis PT4 (strain P125109).